A 145-amino-acid polypeptide reads, in one-letter code: D-aminoacyl-tRNA deacylase (145 aa).

The Gly-cisPro motif, important for rejection of L-amino acids motif lies at 137-138 (GP).

This sequence belongs to the DTD family. Homodimer.

The protein localises to the cytoplasm. It catalyses the reaction glycyl-tRNA(Ala) + H2O = tRNA(Ala) + glycine + H(+). It carries out the reaction a D-aminoacyl-tRNA + H2O = a tRNA + a D-alpha-amino acid + H(+). Functionally, an aminoacyl-tRNA editing enzyme that deacylates mischarged D-aminoacyl-tRNAs. Also deacylates mischarged glycyl-tRNA(Ala), protecting cells against glycine mischarging by AlaRS. Acts via tRNA-based rather than protein-based catalysis; rejects L-amino acids rather than detecting D-amino acids in the active site. By recycling D-aminoacyl-tRNA to D-amino acids and free tRNA molecules, this enzyme counteracts the toxicity associated with the formation of D-aminoacyl-tRNA entities in vivo and helps enforce protein L-homochirality. This is D-aminoacyl-tRNA deacylase from Salmonella paratyphi C (strain RKS4594).